Consider the following 390-residue polypeptide: Dual-specificity RNA methyltransferase RlmN (390 aa).

Residue Glu-110 is the Proton acceptor of the active site. Positions Glu-116–Asp-355 constitute a Radical SAM core domain. A disulfide bridge links Cys-123 with Cys-360. 3 residues coordinate [4Fe-4S] cluster: Cys-130, Cys-134, and Cys-137. S-adenosyl-L-methionine-binding positions include Gly-184 to Glu-185, Ser-216, Ser-238 to His-240, and Asn-317. Residue Cys-360 is the S-methylcysteine intermediate of the active site.

It belongs to the radical SAM superfamily. RlmN family. The cofactor is [4Fe-4S] cluster.

The protein resides in the cytoplasm. It carries out the reaction adenosine(2503) in 23S rRNA + 2 reduced [2Fe-2S]-[ferredoxin] + 2 S-adenosyl-L-methionine = 2-methyladenosine(2503) in 23S rRNA + 5'-deoxyadenosine + L-methionine + 2 oxidized [2Fe-2S]-[ferredoxin] + S-adenosyl-L-homocysteine. It catalyses the reaction adenosine(37) in tRNA + 2 reduced [2Fe-2S]-[ferredoxin] + 2 S-adenosyl-L-methionine = 2-methyladenosine(37) in tRNA + 5'-deoxyadenosine + L-methionine + 2 oxidized [2Fe-2S]-[ferredoxin] + S-adenosyl-L-homocysteine. Specifically methylates position 2 of adenine 2503 in 23S rRNA and position 2 of adenine 37 in tRNAs. m2A2503 modification seems to play a crucial role in the proofreading step occurring at the peptidyl transferase center and thus would serve to optimize ribosomal fidelity. This is Dual-specificity RNA methyltransferase RlmN from Haemophilus influenzae (strain PittEE).